Consider the following 400-residue polypeptide: Elongation factor Tu (400 aa).

One can recognise a tr-type G domain in the interval 10–210 (KPHVNVGTIG…ALDSYIPEPV (201 aa)). The interval 19-26 (GHVDHGKT) is G1. Residue 19-26 (GHVDHGKT) coordinates GTP. Residue threonine 26 coordinates Mg(2+). The tract at residues 66 to 70 (ILTIA) is G2. The tract at residues 87–90 (DCPG) is G3. Residues 87–91 (DCPGH) and 142–145 (NKCD) contribute to the GTP site. Residues 142 to 145 (NKCD) are G4. The interval 180–182 (SAI) is G5.

It belongs to the TRAFAC class translation factor GTPase superfamily. Classic translation factor GTPase family. EF-Tu/EF-1A subfamily. In terms of assembly, monomer.

The protein resides in the cytoplasm. It catalyses the reaction GTP + H2O = GDP + phosphate + H(+). Its function is as follows. GTP hydrolase that promotes the GTP-dependent binding of aminoacyl-tRNA to the A-site of ribosomes during protein biosynthesis. The chain is Elongation factor Tu from Gemmatimonas aurantiaca (strain DSM 14586 / JCM 11422 / NBRC 100505 / T-27).